The sequence spans 438 residues: GRAS family protein TF80 (438 aa).

The GRAS domain occupies leucine 13–lysine 436. The interval serine 20–valine 81 is leucine repeat I (LRI). The interval glutamine 100–glycine 165 is VHIID. The VHIID signature appears at valine 131–aspartate 135. The tract at residues glutamine 175–asparagine 207 is leucine repeat II (LRII). The tract at residues valine 216 to asparagine 359 is PFYRE. Residues leucine 224–leucine 228 carry the LXXLL motif motif. The interval threonine 362–lysine 436 is SAW.

Belongs to the GRAS family. Interacts with RAM1.

Its subcellular location is the nucleus. The sequence is that of GRAS family protein TF80 (TF80) from Medicago truncatula (Barrel medic).